The following is a 56-amino-acid chain: Small integral membrane protein 39 (56 aa).

The helical transmembrane segment at 33 to 53 (VVVSAVLALLVLINVVLIFLL) threads the bilayer.

The protein localises to the membrane. This Homo sapiens (Human) protein is Small integral membrane protein 39.